Consider the following 472-residue polypeptide: Cysteine--tRNA ligase (472 aa).

Cys-28 is a binding site for Zn(2+). A 'HIGH' region motif is present at residues 30–40 (PTVYNYIHIGN). Cys-212, His-237, and Glu-241 together coordinate Zn(2+). The 'KMSKS' region signature appears at 271–275 (KMSKS). Residue Lys-274 coordinates ATP.

Belongs to the class-I aminoacyl-tRNA synthetase family. As to quaternary structure, monomer. Zn(2+) serves as cofactor.

It is found in the cytoplasm. The enzyme catalyses tRNA(Cys) + L-cysteine + ATP = L-cysteinyl-tRNA(Cys) + AMP + diphosphate. This Limosilactobacillus fermentum (strain NBRC 3956 / LMG 18251) (Lactobacillus fermentum) protein is Cysteine--tRNA ligase.